Consider the following 312-residue polypeptide: Cobalamin biosynthesis protein CobD (312 aa).

4 helical membrane passes run 61–81 (IALL…LPLL), 83–103 (IIVP…AQHA), 152–172 (DAVF…AVLY), and 292–312 (GMWL…AIHA).

Belongs to the CobD/CbiB family.

The protein localises to the cell membrane. It participates in cofactor biosynthesis; adenosylcobalamin biosynthesis. Its function is as follows. Converts cobyric acid to cobinamide by the addition of aminopropanol on the F carboxylic group. In Chromobacterium violaceum (strain ATCC 12472 / DSM 30191 / JCM 1249 / CCUG 213 / NBRC 12614 / NCIMB 9131 / NCTC 9757 / MK), this protein is Cobalamin biosynthesis protein CobD.